We begin with the raw amino-acid sequence, 130 residues long: DNA-directed RNA polymerase subunit omega (130 aa).

Disordered regions lie at residues glutamate 79–aspartate 98 and glutamate 109–glutamate 130.

The protein belongs to the RNA polymerase subunit omega family. In terms of assembly, the RNAP catalytic core consists of 2 alpha, 1 beta, 1 beta' and 1 omega subunit. When a sigma factor is associated with the core the holoenzyme is formed, which can initiate transcription.

It catalyses the reaction RNA(n) + a ribonucleoside 5'-triphosphate = RNA(n+1) + diphosphate. In terms of biological role, promotes RNA polymerase assembly. Latches the N- and C-terminal regions of the beta' subunit thereby facilitating its interaction with the beta and alpha subunits. This chain is DNA-directed RNA polymerase subunit omega (rpoZ), found in Bradyrhizobium diazoefficiens (strain JCM 10833 / BCRC 13528 / IAM 13628 / NBRC 14792 / USDA 110).